We begin with the raw amino-acid sequence, 423 residues long: Glutamine synthetase, chloroplastic (423 aa).

A chloroplast-targeting transit peptide spans 1–51 (MAQAVVPAMQCRVGVKAAAGRVWSAGRTRTGRGGASPGFKVMAVSTGSTGV). The region spanning 70-150 (VIAEYIWVGG…VICDTYTPQG (81 aa)) is the GS beta-grasp domain. The tract at residues 89–115 (RTISKPVEDPSELPKWNYDGSSTGQAP) is disordered. Residues 154-423 (PTNKRHRAAQ…LAAKKLALKV (270 aa)) form the GS catalytic domain.

The protein belongs to the glutamine synthetase family. In terms of assembly, homooctamer.

The protein resides in the plastid. Its subcellular location is the chloroplast. It catalyses the reaction L-glutamate + NH4(+) + ATP = L-glutamine + ADP + phosphate + H(+). Its function is as follows. The light-modulated chloroplast enzyme, encoded by a nuclear gene and expressed primarily in leaves, is responsible for the reassimilation of the ammonia generated by photorespiration. This chain is Glutamine synthetase, chloroplastic (GLN2), found in Zea mays (Maize).